The chain runs to 45 residues: Large ribosomal subunit protein bL34 (45 aa).

Residues 22-45 (RMRTKSGQNVIKARRRKGRARLTV) are disordered. The span at 33 to 45 (KARRRKGRARLTV) shows a compositional bias: basic residues.

It belongs to the bacterial ribosomal protein bL34 family.

This is Large ribosomal subunit protein bL34 from Thermosynechococcus vestitus (strain NIES-2133 / IAM M-273 / BP-1).